Reading from the N-terminus, the 419-residue chain is Histidine--tRNA ligase (419 aa).

This sequence belongs to the class-II aminoacyl-tRNA synthetase family. As to quaternary structure, homodimer.

Its subcellular location is the cytoplasm. The catalysed reaction is tRNA(His) + L-histidine + ATP = L-histidyl-tRNA(His) + AMP + diphosphate + H(+). The chain is Histidine--tRNA ligase from Caldicellulosiruptor saccharolyticus (strain ATCC 43494 / DSM 8903 / Tp8T 6331).